We begin with the raw amino-acid sequence, 702 residues long: Ferrioxamine B receptor (702 aa).

The N-terminal stretch at 1-30 (MPLEMFMFATTRMALLIGGAIGGATFPLFA) is a signal peptide. The 114-residue stretch at 55 to 168 (PDIETPQSVS…PGGIVALTSR (114 aa)) folds into the TBDR plug domain. The TBDR beta-barrel domain occupies 173-702 (DAGGEVKLFA…SIVGSVSWAF (530 aa)).

This sequence belongs to the TonB-dependent receptor family.

Its subcellular location is the cell outer membrane. Functionally, ferrioxamine binding and uptake, in association with the TonB protein. This chain is Ferrioxamine B receptor (foxA), found in Salmonella typhimurium (strain LT2 / SGSC1412 / ATCC 700720).